The following is a 119-amino-acid chain: Beta-2-microglobulin (119 aa).

The signal sequence occupies residues 1-20; it reads MARSVVVALLVLLSLSGLEA. In terms of domain architecture, Ig-like C1-type spans 25-114; the sequence is PKIQVYSRHP…VTFPTPKTVK (90 aa). A disulfide bridge connects residues Cys45 and Cys100.

It belongs to the beta-2-microglobulin family. In terms of assembly, heterodimer of an alpha chain and a beta chain. Beta-2-microglobulin is the beta-chain of major histocompatibility complex class I molecules.

Its subcellular location is the secreted. Functionally, component of the class I major histocompatibility complex (MHC). Involved in the presentation of peptide antigens to the immune system. In Lagothrix lagotricha (Brown woolly monkey), this protein is Beta-2-microglobulin (B2M).